Reading from the N-terminus, the 308-residue chain is UPF0026 protein HP_0117 (308 aa).

The Radical SAM core domain occupies 18 to 248 (FGKSLGVDLS…SLPKRSITQA (231 aa)). [4Fe-4S] cluster contacts are provided by C33, C37, and C40.

It belongs to the UPF0026 family. Requires [4Fe-4S] cluster as cofactor.

This Helicobacter pylori (strain ATCC 700392 / 26695) (Campylobacter pylori) protein is UPF0026 protein HP_0117.